A 164-amino-acid polypeptide reads, in one-letter code: CASP-like protein 1C2 (164 aa).

Residues 1–8 are Cytoplasmic-facing; that stretch reads MVKLTQRL. A helical membrane pass occupies residues 9-29; the sequence is GGLVLRFAAFCAALGAVIAMI. The Extracellular segment spans residues 30–51; it reads TSRERSSFFVISLVAKYSDLAA. The chain crosses the membrane as a helical span at residues 52-72; it reads FKYFVIANAIVTVYSFLVLFL. Topologically, residues 73–80 are cytoplasmic; that stretch reads PKESLLWK. A helical membrane pass occupies residues 81-101; it reads FVVVLDLMVTMLLTSSLSAAV. The Extracellular portion of the chain corresponds to 102–129; it reads AVAQVGKRGNANAGWLPICGQVPRFCDQ. The helical transmembrane segment at 130-150 threads the bilayer; sequence ITGALIAGLVALVLYVFLLIF. Topologically, residues 151 to 164 are cytoplasmic; sequence SIHHVVDPFLLRKS.

This sequence belongs to the Casparian strip membrane proteins (CASP) family. Homodimer and heterodimers.

It is found in the cell membrane. In Arabidopsis thaliana (Mouse-ear cress), this protein is CASP-like protein 1C2.